The primary structure comprises 293 residues: N-acetylneuraminate lyase (293 aa).

Positions 47, 48, and 136 each coordinate aceneuramate. Catalysis depends on Tyr-136, which acts as the Proton donor. The Schiff-base intermediate with substrate role is filled by Lys-164. Aceneuramate-binding residues include Thr-166, Gly-188, Asp-190, Glu-191, Ser-207, and Tyr-251.

This sequence belongs to the DapA family. NanA subfamily. In terms of assembly, homotetramer.

The protein resides in the cytoplasm. It catalyses the reaction aceneuramate = aldehydo-N-acetyl-D-mannosamine + pyruvate. It participates in amino-sugar metabolism; N-acetylneuraminate degradation; D-fructose 6-phosphate from N-acetylneuraminate: step 1/5. Functionally, catalyzes the reversible aldol cleavage of N-acetylneuraminic acid (sialic acid; Neu5Ac) to form pyruvate and N-acetylmannosamine (ManNAc) via a Schiff base intermediate. In Pasteurella multocida (strain Pm70), this protein is N-acetylneuraminate lyase.